The following is a 142-amino-acid chain: UPF0102 protein Bcen2424_0290 (142 aa).

Positions 1–19 (MCHAAPARPEGARGRPPSG) are enriched in low complexity. The tract at residues 1-27 (MCHAAPARPEGARGRPPSGDNFSGAAR) is disordered.

This sequence belongs to the UPF0102 family.

This is UPF0102 protein Bcen2424_0290 from Burkholderia cenocepacia (strain HI2424).